A 151-amino-acid chain; its full sequence is 3-dehydroquinate dehydratase (151 aa).

Residue Tyr26 is the Proton acceptor of the active site. Residues Asn77, His83, and Asp90 each coordinate substrate. Residue His103 is the Proton donor of the active site. Substrate-binding positions include 104-105 and Arg114; that span reads LS.

This sequence belongs to the type-II 3-dehydroquinase family. As to quaternary structure, homododecamer.

It carries out the reaction 3-dehydroquinate = 3-dehydroshikimate + H2O. It functions in the pathway metabolic intermediate biosynthesis; chorismate biosynthesis; chorismate from D-erythrose 4-phosphate and phosphoenolpyruvate: step 3/7. Its function is as follows. Catalyzes a trans-dehydration via an enolate intermediate. The chain is 3-dehydroquinate dehydratase from Pelodictyon phaeoclathratiforme (strain DSM 5477 / BU-1).